Reading from the N-terminus, the 375-residue chain is MHCALYDAGRCRSCQWIEQPPDTQLAAKMTDLRTLLAALPVGEWGAPVSGPELAFRNKAKMVVSGSVEKPLLGMLHRDGTPVDLTECPLYPASFYAVFAALKPFIARAGLTPYNVARKRGELKYLLLTQSTLDGGLMLRFVLRSKEKLEQLRAALPGLLAELPQLKVVTANIQPVHMAIMEGDEEIWLTQQQALAESFNGVPLWIRPQSFFQTNPTVASALYATARDWVRALPVNHMWDLFCGVGGFGLHCATPEMTLTGIEIAPEAIASARASAQALGLRNVHFQALDSTDFATGQQAVPDLVLVNPPRRGIGKALCEYLSHMAPRYIVYSSCNAQTMAKDIGEWPGYRIARVQLFDMFPHTAHYEVLTLLVRE.

[4Fe-4S] cluster-binding residues include C3, C11, C14, and C87. Residues Q212, F241, E262, and N307 each contribute to the S-adenosyl-L-methionine site. The active-site Nucleophile is C334.

Belongs to the class I-like SAM-binding methyltransferase superfamily. RNA M5U methyltransferase family. RlmC subfamily.

It catalyses the reaction uridine(747) in 23S rRNA + S-adenosyl-L-methionine = 5-methyluridine(747) in 23S rRNA + S-adenosyl-L-homocysteine + H(+). Catalyzes the formation of 5-methyl-uridine at position 747 (m5U747) in 23S rRNA. In Cronobacter sakazakii (strain ATCC BAA-894) (Enterobacter sakazakii), this protein is 23S rRNA (uracil(747)-C(5))-methyltransferase RlmC.